The following is a 232-amino-acid chain: Ubiquinone biosynthesis O-methyltransferase (232 aa).

S-adenosyl-L-methionine contacts are provided by Arg36, Gly55, Asp76, and Met120.

This sequence belongs to the methyltransferase superfamily. UbiG/COQ3 family.

The enzyme catalyses a 3-demethylubiquinol + S-adenosyl-L-methionine = a ubiquinol + S-adenosyl-L-homocysteine + H(+). It carries out the reaction a 3-(all-trans-polyprenyl)benzene-1,2-diol + S-adenosyl-L-methionine = a 2-methoxy-6-(all-trans-polyprenyl)phenol + S-adenosyl-L-homocysteine + H(+). Its pathway is cofactor biosynthesis; ubiquinone biosynthesis. O-methyltransferase that catalyzes the 2 O-methylation steps in the ubiquinone biosynthetic pathway. The protein is Ubiquinone biosynthesis O-methyltransferase of Burkholderia multivorans (strain ATCC 17616 / 249).